Consider the following 316-residue polypeptide: Olfactory receptor 8J1 (316 aa).

The Extracellular segment spans residues 1-25; the sequence is MAPENFTRVTEFILTGVSSCPELQI. Asn-5 carries N-linked (GlcNAc...) asparagine glycosylation. Residues 26-46 form a helical membrane-spanning segment; it reads PLFLVFLVLYGLTMAGNLGII. The Cytoplasmic portion of the chain corresponds to 47–54; that stretch reads TLTSVDSR. Residues 55–75 form a helical membrane-spanning segment; the sequence is LQTPMYFFLQHLALINLGNST. At 76–99 the chain is on the extracellular side; the sequence is VIAPKMLINFLVKKKTTSFYECAT. A disulfide bridge connects residues Cys-97 and Cys-189. Residues 100–120 form a helical membrane-spanning segment; sequence QLGGFLFFIVSEVIMLALMAY. Residues 121–139 lie on the Cytoplasmic side of the membrane; that stretch reads DRYVAICNPLLYMVVVSRR. The chain crosses the membrane as a helical span at residues 140–160; it reads LCLLLVSLTYLYGFSTAIVVS. Residues 161 to 197 lie on the Extracellular side of the membrane; the sequence is SYVFSVSYCSSNIINHFYCDNVPLLALSCSDTYLPET. The chain crosses the membrane as a helical span at residues 198-217; it reads VVFISAATNVVGSLIIVLVS. Over 218–237 the chain is Cytoplasmic; the sequence is YFNIVLSILKICSSEGRKKA. The helical transmembrane segment at 238 to 258 threads the bilayer; the sequence is FSTCASHMMAVTIFYGTLLFM. The Extracellular segment spans residues 259–272; that stretch reads YVQPRSNHSLDTDD. The helical transmembrane segment at 273–293 threads the bilayer; the sequence is KMASVFYTLVIPMLNPLIYSL. At 294 to 316 the chain is on the cytoplasmic side; the sequence is RNKDVKTALQRFMTNLCYSFKTM.

It belongs to the G-protein coupled receptor 1 family.

The protein localises to the cell membrane. In terms of biological role, odorant receptor. The polypeptide is Olfactory receptor 8J1 (OR8J1) (Homo sapiens (Human)).